The sequence spans 252 residues: 3-dehydroquinate dehydratase (252 aa).

3-dehydroquinate is bound by residues 46–48 and Arg-82; that span reads EWR. The Proton donor/acceptor role is filled by His-143. Residue Lys-170 is the Schiff-base intermediate with substrate of the active site. Positions 212, 231, and 235 each coordinate 3-dehydroquinate.

It belongs to the type-I 3-dehydroquinase family. As to quaternary structure, homodimer.

The catalysed reaction is 3-dehydroquinate = 3-dehydroshikimate + H2O. It participates in metabolic intermediate biosynthesis; chorismate biosynthesis; chorismate from D-erythrose 4-phosphate and phosphoenolpyruvate: step 3/7. Involved in the third step of the chorismate pathway, which leads to the biosynthesis of aromatic amino acids. Catalyzes the cis-dehydration of 3-dehydroquinate (DHQ) and introduces the first double bond of the aromatic ring to yield 3-dehydroshikimate. In Listeria innocua serovar 6a (strain ATCC BAA-680 / CLIP 11262), this protein is 3-dehydroquinate dehydratase.